The following is a 97-amino-acid chain: Co-chaperonin GroES (97 aa).

This sequence belongs to the GroES chaperonin family. Heptamer of 7 subunits arranged in a ring. Interacts with the chaperonin GroEL.

The protein resides in the cytoplasm. Functionally, together with the chaperonin GroEL, plays an essential role in assisting protein folding. The GroEL-GroES system forms a nano-cage that allows encapsulation of the non-native substrate proteins and provides a physical environment optimized to promote and accelerate protein folding. GroES binds to the apical surface of the GroEL ring, thereby capping the opening of the GroEL channel. The chain is Co-chaperonin GroES from Yersinia enterocolitica serotype O:8 / biotype 1B (strain NCTC 13174 / 8081).